Consider the following 660-residue polypeptide: Bifunctional polymyxin resistance protein ArnA (660 aa).

Residues 1-304 (MKTVVFAYHD…TLGLVQGSRL (304 aa)) form a formyltransferase ArnAFT region. Position 86-88 (86-88 (HLI)) interacts with (6R)-10-formyltetrahydrofolate. His-104 acts as the Proton donor; for formyltransferase activity in catalysis. Residues Arg-114 and 136–140 (VKRAD) contribute to the (6R)-10-formyltetrahydrofolate site. Positions 314–660 (RRTRVLILGV…RTVDLTDKPL (347 aa)) are dehydrogenase ArnADH. Residues Asp-347 and 368 to 369 (DI) each bind NAD(+). UDP-alpha-D-glucuronate contacts are provided by residues Ala-393, Tyr-398, and 432 to 433 (TS). The Proton acceptor; for decarboxylase activity role is filled by Glu-434. UDP-alpha-D-glucuronate is bound by residues Arg-460, Asn-492, 526–535 (KLIDGGKQKR), and Tyr-613. Residue Arg-619 is the Proton donor; for decarboxylase activity of the active site.

This sequence in the N-terminal section; belongs to the Fmt family. UDP-L-Ara4N formyltransferase subfamily. The protein in the C-terminal section; belongs to the NAD(P)-dependent epimerase/dehydratase family. UDP-glucuronic acid decarboxylase subfamily. Homohexamer, formed by a dimer of trimers.

It catalyses the reaction UDP-alpha-D-glucuronate + NAD(+) = UDP-beta-L-threo-pentopyranos-4-ulose + CO2 + NADH. The catalysed reaction is UDP-4-amino-4-deoxy-beta-L-arabinose + (6R)-10-formyltetrahydrofolate = UDP-4-deoxy-4-formamido-beta-L-arabinose + (6S)-5,6,7,8-tetrahydrofolate + H(+). Its pathway is nucleotide-sugar biosynthesis; UDP-4-deoxy-4-formamido-beta-L-arabinose biosynthesis; UDP-4-deoxy-4-formamido-beta-L-arabinose from UDP-alpha-D-glucuronate: step 1/3. It functions in the pathway nucleotide-sugar biosynthesis; UDP-4-deoxy-4-formamido-beta-L-arabinose biosynthesis; UDP-4-deoxy-4-formamido-beta-L-arabinose from UDP-alpha-D-glucuronate: step 3/3. The protein operates within bacterial outer membrane biogenesis; lipopolysaccharide biosynthesis. In terms of biological role, bifunctional enzyme that catalyzes the oxidative decarboxylation of UDP-glucuronic acid (UDP-GlcUA) to UDP-4-keto-arabinose (UDP-Ara4O) and the addition of a formyl group to UDP-4-amino-4-deoxy-L-arabinose (UDP-L-Ara4N) to form UDP-L-4-formamido-arabinose (UDP-L-Ara4FN). The modified arabinose is attached to lipid A and is required for resistance to polymyxin and cationic antimicrobial peptides. The chain is Bifunctional polymyxin resistance protein ArnA from Escherichia coli O6:K15:H31 (strain 536 / UPEC).